The following is an 86-amino-acid chain: Cell division topological specificity factor (86 aa).

The protein belongs to the MinE family.

In terms of biological role, prevents the cell division inhibition by proteins MinC and MinD at internal division sites while permitting inhibition at polar sites. This ensures cell division at the proper site by restricting the formation of a division septum at the midpoint of the long axis of the cell. In Allorhizobium ampelinum (strain ATCC BAA-846 / DSM 112012 / S4) (Agrobacterium vitis (strain S4)), this protein is Cell division topological specificity factor.